Here is a 411-residue protein sequence, read N- to C-terminus: Bestrophin homolog 26 (411 aa).

Transmembrane regions (helical) follow at residues 30–50 (FTAI…FMVI), 73–93 (SHQE…SSVV), 235–255 (IPIP…YFAV), and 272–292 (TWIT…MGWM).

Belongs to the anion channel-forming bestrophin (TC 1.A.46) family. Calcium-sensitive chloride channel subfamily. Forms oligomers.

It is found in the cell membrane. Forms chloride channels. This Caenorhabditis elegans protein is Bestrophin homolog 26 (best-26).